The following is a 498-amino-acid chain: Na(+)/H(+) exchange regulatory cofactor NHE-RF4 (498 aa).

PDZ domains follow at residues 49–130 (FCLL…LAQH), 157–235 (LCHV…AGLE), 263–346 (CLNI…VDPE), and 394–475 (QCFL…GARN). At Ser-329 the chain carries Phosphoserine.

Interacts with the C-terminal region of GUCY2C. Interacts with C-terminal region of SLC9A3 and the interactions decrease in response to elevated calcium ion levels. Interacts with the C-terminal region of SLC34A1. Interacts with USP2 isoform 2. Interacts (via the third PDZ domain) with SLC26A3 (via PDZ-binding motif). This interaction leads to decreased expression of SLC26A3 on the cell membrane resulting in its reduced exchanger activity. Phosphorylation at Ser-329 negatively regulates its interaction with SLC26A3. Expressed in kidney and small intestine. Not detected in heart, brain, spleen, lung, liver, skeletal muscle or testis.

The protein resides in the cell membrane. It localises to the cytoplasm. Acts as a regulatory protein that associates with GUCY2C and negatively modulates its heat-stable enterotoxin-mediated activation. Stimulates SLC9A3 activity in the presence of elevated calcium ions. In Mus musculus (Mouse), this protein is Na(+)/H(+) exchange regulatory cofactor NHE-RF4 (Nherf4).